The primary structure comprises 197 residues: Small ribosomal subunit protein uS4c (197 aa).

An S4 RNA-binding domain is found at Met84–Leu143.

This sequence belongs to the universal ribosomal protein uS4 family. In terms of assembly, part of the 30S ribosomal subunit. Contacts protein S5. The interaction surface between S4 and S5 is involved in control of translational fidelity.

The protein localises to the plastid. It is found in the chloroplast. In terms of biological role, one of the primary rRNA binding proteins, it binds directly to 16S rRNA where it nucleates assembly of the body of the 30S subunit. Its function is as follows. With S5 and S12 plays an important role in translational accuracy. The polypeptide is Small ribosomal subunit protein uS4c (rps4) (Adiantum capillus-veneris (Maidenhair fern)).